Here is a 186-residue protein sequence, read N- to C-terminus: MLLFVGLGNPTPDSENNRHNIGFKLIDALNQKFGLSKQKPKFKGLLTTGNVEDKKVYAIKPLTFMNNSGICIRELIEYFKIDAEDVIVFHDDLDLEFGKVKAKFAGSSAGHNGIESIDKFIGKDYSRVRIGIGRPKTKADVADHVLKDFDEDEMIQLEKITKNIIDSMAILIDKKLDLFSSTVNNK.

The active-site Proton acceptor is the His19. TRNA contacts are provided by Phe64, Asn66, and Asn112.

Belongs to the PTH family. In terms of assembly, monomer.

Its subcellular location is the cytoplasm. The enzyme catalyses an N-acyl-L-alpha-aminoacyl-tRNA + H2O = an N-acyl-L-amino acid + a tRNA + H(+). In terms of biological role, hydrolyzes ribosome-free peptidyl-tRNAs (with 1 or more amino acids incorporated), which drop off the ribosome during protein synthesis, or as a result of ribosome stalling. Catalyzes the release of premature peptidyl moieties from peptidyl-tRNA molecules trapped in stalled 50S ribosomal subunits, and thus maintains levels of free tRNAs and 50S ribosomes. This chain is Peptidyl-tRNA hydrolase, found in Pelagibacter ubique (strain HTCC1062).